The chain runs to 300 residues: Very-long-chain enoyl-CoA reductase (300 aa).

The helical transmembrane segment at 91 to 111 (SLVFICEYAGPLFVYPIFYFL) threads the bilayer. N163 carries N-linked (GlcNAc...) asparagine glycosylation. The helical transmembrane segment at 191–211 (VYLGLGLWIIGEVFNYICHIQ) threads the bilayer. The N-linked (GlcNAc...) asparagine glycan is linked to N238. A helical membrane pass occupies residues 243 to 263 (ILSWIGFSILTQTLTSWIFAL).

This sequence belongs to the steroid 5-alpha reductase family.

It localises to the endoplasmic reticulum membrane. The catalysed reaction is a very-long-chain 2,3-saturated fatty acyl-CoA + NADP(+) = a very-long-chain (2E)-enoyl-CoA + NADPH + H(+). It functions in the pathway lipid metabolism; fatty acid biosynthesis. Catalyzes the last of the four reactions of the long-chain fatty acids elongation cycle. This endoplasmic reticulum-bound enzymatic process, allows the addition of 2 carbons to the chain of long- and very long-chain fatty acids/VLCFAs per cycle. This enzyme reduces the trans-2,3-enoyl-CoA fatty acid intermediate to an acyl-CoA that can be further elongated by entering a new cycle of elongation. Thereby, it participates in the production of VLCFAs of different chain lengths that are involved in multiple biological processes as precursors of membrane lipids and lipid mediators. The protein is Very-long-chain enoyl-CoA reductase (gpsn2) of Dictyostelium discoideum (Social amoeba).